A 900-amino-acid polypeptide reads, in one-letter code: DNA polymerase nu (900 aa).

Residues 60–75 (LEDRKTQSPEKKDLKS) show a composition bias toward basic and acidic residues. Disordered stretches follow at residues 60-90 (LEDRKTQSPEKKDLKSLRSQTSRGSAKLSPQ) and 863-900 (GPPPGPCRTESPSNSLAAPGSPASTQPPPLHFSPSFCL). Polar residues predominate over residues 76–90 (LRSQTSRGSAKLSPQ).

This sequence belongs to the DNA polymerase type-A family. As to quaternary structure, interacts with FANCD2, FANCI, PCNA, RAD51 and HELQ. In terms of tissue distribution, highly expressed in testis and heart. Weakly expressed in skeletal muscle.

It is found in the nucleus. It carries out the reaction DNA(n) + a 2'-deoxyribonucleoside 5'-triphosphate = DNA(n+1) + diphosphate. With respect to regulation, inhibited by ddTTP. Functionally, DNA polymerase with very low fidelity that catalyzes considerable misincorporation by inserting dTTP opposite a G template, and dGTP opposite a T template. Is the least accurate of the DNA polymerase A family (i.e. POLG, POLN and POLQ). Can perform accurate translesion DNA synthesis (TLS) past a 5S-thymine glycol. Can perform efficient strand displacement past a nick or a gap and gives rise to an amount of product similar to that on non-damaged template. Has no exonuclease activity. Error-prone DNA polymerase that preferentially misincorporates dT regardless of template sequence. May play a role in TLS during interstrand cross-link (ICL) repair. May be involved in TLS when genomic replication is blocked by extremely large major groove DNA lesions. May function in the bypass of some DNA-protein and DNA-DNA cross-links. May have a role in cellular tolerance to DNA cross-linking agents. Involved in the repair of DNA cross-links and double-strand break (DSB) resistance. Participates in FANCD2-mediated repair. Forms a complex with HELQ helicase that participates in homologous recombination (HR) repair and is essential for cellular protection against DNA cross-links. This chain is DNA polymerase nu (POLN), found in Homo sapiens (Human).